A 775-amino-acid polypeptide reads, in one-letter code: Lon protease (775 aa).

In terms of domain architecture, Lon N-terminal spans 6-207 (LPLMALRDIV…TIINILTSNI (202 aa)). 356–363 (GPPGVGKT) is a binding site for ATP. The Lon proteolytic domain maps to 592-773 (NDQIGSTTGL…DQVLEHALTK (182 aa)). Catalysis depends on residues S679 and K722.

The protein belongs to the peptidase S16 family. In terms of assembly, homohexamer. Organized in a ring with a central cavity.

It is found in the cytoplasm. The enzyme catalyses Hydrolysis of proteins in presence of ATP.. Its function is as follows. ATP-dependent serine protease that mediates the selective degradation of mutant and abnormal proteins as well as certain short-lived regulatory proteins. Required for cellular homeostasis and for survival from DNA damage and developmental changes induced by stress. Degrades polypeptides processively to yield small peptide fragments that are 5 to 10 amino acids long. Binds to DNA in a double-stranded, site-specific manner. In Rickettsia bellii (strain RML369-C), this protein is Lon protease.